The chain runs to 264 residues: Carbonic anhydrase (264 aa).

The tat-type signal signal peptide spans 1–33 (MSSTLYRRQLLKLLGMSVLGTSFSSCVTSPARA). Residues 36–264 (VNWGYIGKVG…LNDRLVIEAI (229 aa)) form the Alpha-carbonic anhydrase domain. Residues His127, His129, and His146 each contribute to the Zn(2+) site. 214 to 215 (TT) is a substrate binding site.

This sequence belongs to the alpha-carbonic anhydrase family. It depends on Zn(2+) as a cofactor. Post-translationally, predicted to be exported by the Tat system. The position of the signal peptide cleavage has not been experimentally proven.

The enzyme catalyses hydrogencarbonate + H(+) = CO2 + H2O. Reversible hydration of carbon dioxide. This Nostoc sp. (strain PCC 7120 / SAG 25.82 / UTEX 2576) protein is Carbonic anhydrase (ecaA).